A 137-amino-acid polypeptide reads, in one-letter code: Small ribosomal subunit protein bS16m (137 aa).

A mitochondrion-targeting transit peptide spans 1 to 34 (MVHLTTLLCKAYRGGHLTIRLALGGCTNRPFYRI). At threonine 130 the chain carries Phosphothreonine.

The protein belongs to the bacterial ribosomal protein bS16 family. Component of the mitochondrial small ribosomal subunit (mt-SSU). Mature mammalian 55S mitochondrial ribosomes consist of a small (28S) and a large (39S) subunit. The 28S small subunit contains a 12S ribosomal RNA (12S mt-rRNA) and 30 different proteins. The 39S large subunit contains a 16S rRNA (16S mt-rRNA), a copy of mitochondrial valine transfer RNA (mt-tRNA(Val)), which plays an integral structural role, and 52 different proteins. bS16m has a zinc binding site.

The protein localises to the mitochondrion. The protein is Small ribosomal subunit protein bS16m (MRPS16) of Homo sapiens (Human).